Here is a 489-residue protein sequence, read N- to C-terminus: DNA-directed RNA polymerase subunit beta' C-terminal section (489 aa).

Residues Asp208, Asp210, and Asp212 each contribute to the Mg(2+) site.

Belongs to the RNA polymerase beta' chain family. RpoC1 subfamily. In terms of assembly, in plastids the minimal PEP RNA polymerase catalytic core is composed of four subunits: alpha, beta, beta', and beta''. When a (nuclear-encoded) sigma factor is associated with the core the holoenzyme is formed, which can initiate transcription. Mg(2+) serves as cofactor.

The protein resides in the plastid. Its subcellular location is the chloroplast. It carries out the reaction RNA(n) + a ribonucleoside 5'-triphosphate = RNA(n+1) + diphosphate. In terms of biological role, DNA-dependent RNA polymerase catalyzes the transcription of DNA into RNA using the four ribonucleoside triphosphates as substrates. The polypeptide is DNA-directed RNA polymerase subunit beta' C-terminal section (rpoC1B) (Chlamydomonas reinhardtii (Chlamydomonas smithii)).